We begin with the raw amino-acid sequence, 471 residues long: Anthocyanidin 3-O-glucosyltransferase (471 aa).

Histidine 24 functions as the Proton acceptor in the catalytic mechanism. Histidine 24 contributes to the an anthocyanidin binding site. Aspartate 130 (charge relay) is an active-site residue. Position 152 (threonine 152) interacts with UDP-alpha-D-glucose. Histidine 161 contacts an anthocyanidin. Positions 352, 354, 369, 372, 374, and 377 each coordinate UDP-alpha-D-glucose. Glycine 392 provides a ligand contact to an anthocyanidin. Residues aspartate 393 and glutamine 394 each contribute to the UDP-alpha-D-glucose site.

It belongs to the UDP-glycosyltransferase family.

The enzyme catalyses an anthocyanidin + UDP-alpha-D-glucose + H(+) = an anthocyanidin 3-O-beta-D-glucoside + UDP. It participates in pigment biosynthesis; anthocyanin biosynthesis. Its function is as follows. In the presence of other necessary color factors, this glycosylation reaction allows the accumulation of anthocyanin pigments. This chain is Anthocyanidin 3-O-glucosyltransferase (BZ1), found in Zea mays (Maize).